The following is a 503-amino-acid chain: Potassium voltage-gated channel subfamily V member 1 (503 aa).

Over 1 to 213 the chain is Cytoplasmic; that stretch reads MELLPPRGRA…EKPGSCTAAR (213 aa). Residues 214 to 234 traverse the membrane as a helical segment; the sequence is IFGVISIIFVAVSIVNMALMS. Residues 235 to 246 are Extracellular-facing; that stretch reads AELSWLDPQLLE. Residues 247 to 267 traverse the membrane as a helical segment; that stretch reads ILEYVCISWFTGEFVLRFLCV. Residues 268-279 are Cytoplasmic-facing; that stretch reads RDRCRFLRKVPN. A helical membrane pass occupies residues 280–300; the sequence is IIDLLAILPFYITLLVESLSG. Residues 301-312 lie on the Extracellular side of the membrane; sequence SQTTQELENVGR. The helical; Voltage-sensor transmembrane segment at 313–334 threads the bilayer; the sequence is IVQVLRLLRALRMLKLGRHSTG. Topologically, residues 335–348 are cytoplasmic; sequence LRSLGMTITQCYEE. The chain crosses the membrane as a helical span at residues 349–369; it reads VGLLLLFLSVGISIFSTVEYF. The Selectivity filter signature appears at 395–400; the sequence is TVGYGD. The helical transmembrane segment at 410-430 threads the bilayer; sequence IVAFMCILSGILVLALPIAII. At 431 to 503 the chain is on the cytoplasmic side; the sequence is NDRFSACYFT…RSSGGDDFWF (73 aa).

Belongs to the potassium channel family. V (TC 1.A.1.2) subfamily. Kv8.1/KCNV1 sub-subfamily. As to quaternary structure, heteromultimer with KCNB1 and KCNB2. Interacts with KCNC4 and KCND1.

Its subcellular location is the cell membrane. Potassium channel subunit that does not form functional channels by itself. Modulates KCNB1 and KCNB2 channel activity by shifting the threshold for inactivation to more negative values and by slowing the rate of inactivation. Can down-regulate the channel activity of KCNB1, KCNB2, KCNC4 and KCND1, possibly by trapping them in intracellular membranes. The sequence is that of Potassium voltage-gated channel subfamily V member 1 (KCNV1) from Bos taurus (Bovine).